A 302-amino-acid chain; its full sequence is uncharacterized protein (302 aa).

9 helical membrane passes run 1–21 (MSWI…LGVI), 33–53 (SLLF…YIYY), 67–87 (FLIE…IFQF), 101–121 (FGII…IILI), 124–144 (FSWL…KTFY), 185–205 (YVTP…VFAI), 220–240 (IIYT…FCLA), 253–273 (LALI…IAIP), and 274–294 (AYIS…ASVI).

Belongs to the TerC family.

The protein localises to the cell membrane. This is an uncharacterized protein from Rickettsia bellii (strain RML369-C).